A 127-amino-acid polypeptide reads, in one-letter code: Large ribosomal subunit protein uL18 (127 aa).

Residues 1-26 (MASTLTVRKSLSDRAKARARRQARGR) form a disordered region. A compositionally biased stretch (basic residues) spans 17-26 (ARARRQARGR).

This sequence belongs to the universal ribosomal protein uL18 family. As to quaternary structure, part of the 50S ribosomal subunit; part of the 5S rRNA/L5/L18/L25 subcomplex. Contacts the 5S and 23S rRNAs.

Its function is as follows. This is one of the proteins that bind and probably mediate the attachment of the 5S RNA into the large ribosomal subunit, where it forms part of the central protuberance. In Cutibacterium acnes (strain DSM 16379 / KPA171202) (Propionibacterium acnes), this protein is Large ribosomal subunit protein uL18.